The following is an 84-amino-acid chain: MSSIIDYPLVTEKAMDEMDFQNKLQFIVDIDAAKPEIRDVVESEYDVTVVDVNTQITPEAEKKATVKLSAEDDAQDVASRIGVF.

This sequence belongs to the universal ribosomal protein uL23 family. As to quaternary structure, part of the 50S ribosomal subunit. Contacts protein L29.

Functionally, binds to 23S rRNA. One of the proteins that surrounds the polypeptide exit tunnel on the outside of the ribosome. The protein is Large ribosomal subunit protein uL23 of Halobacterium salinarum (strain ATCC 700922 / JCM 11081 / NRC-1) (Halobacterium halobium).